A 506-amino-acid chain; its full sequence is MHLQALTGLATLAVTAASQTLWSRDVDYKALSKELSASAKVYFPGTEDFDAASKRWSNLDKPTVNIVAVPATENDVVEITLDLTQANTLRQVKFANKKNLPFLAQNSAHGAITTLGQMKQGIEIYLNQLSGVKIAKDGKSVTILGGTASKKVTMGLWEAGKQTVTGCCECVGYVGPALGGGHGWLQGRHGLIADQFESMNIVLANGTLATVDENSELWWALKGAGHNFGIVTSVTSKTYDAKIKNWAFASLTFKGEKVEELYETINKYILKNGTQPTDLINWSYWFNIPDLDPTGPIVQILLMQEGVDVVDKAYTGPFQELKPLAVDAKKGVYTDLAKWVGVTTEDGPCQKNGAMNPRFPIYLQDYNPAAQKKAFNYFADNIRGDSIFNGSLVTFDGYSTEGVKAIDSKSTAFAYRNQNILVGPLLSYQSNGTATDEKASEIGHKVRDILHEGTGRDTVPVYVNYAFGDEGPKEWYGSEAWRQSRLQELKEAYDPKGMFSFYAPIA.

The first 17 residues, 1-17, serve as a signal peptide directing secretion; that stretch reads MHLQALTGLATLAVTAA. The region spanning 59–241 is the FAD-binding PCMH-type domain; the sequence is LDKPTVNIVA…TSVTSKTYDA (183 aa). N-linked (GlcNAc...) asparagine glycosylation is found at Asn205, Asn272, Asn281, Asn389, and Asn431.

Belongs to the oxygen-dependent FAD-linked oxidoreductase family. FAD is required as a cofactor.

Its pathway is pigment biosynthesis. In terms of biological role, FAD-linked oxidoreductase; part of the gene cluster that mediates the biosynthesis of the yellow pigment chrysogine. Pyruvic acid and anthranilic acid are likely substrates for the nonribosomal peptide synthetase chry1/NRPS14, with pyruvic acid adenylated by the first A domain and anthranilic acid by the second. If pyruvic acid and anthranilic acid are merged and released from chry1/NRPS14 by hydrolysis, a subsequent amidation would lead to 2-pyruvoylaminobenzamide. This process is probably catalyzed by the amidotransferase chry2 using glutamine as amino donor. The dehydrogenase chry5 that has a terminal berberine bridge domain for C-N cyclization could catalyze the cyclization of 2-pyruvoylaminobenzamide to yield acetyl-4(3H)-quinazolidinone. A final reduction of acetyl-4(3H)-quinazolidinone catalyzed by the oxidoreductase chry4 would result in chrysogine. This chain is FAD-linked oxidoreductase chry5, found in Gibberella zeae (strain ATCC MYA-4620 / CBS 123657 / FGSC 9075 / NRRL 31084 / PH-1) (Wheat head blight fungus).